We begin with the raw amino-acid sequence, 298 residues long: Probable endonuclease 4 (298 aa).

Residues His-69, His-111, Glu-146, Asp-180, His-183, His-215, Asp-228, His-230, and Glu-260 each contribute to the Zn(2+) site.

This sequence belongs to the AP endonuclease 2 family. Zn(2+) serves as cofactor.

It carries out the reaction Endonucleolytic cleavage to 5'-phosphooligonucleotide end-products.. Its function is as follows. Endonuclease IV plays a role in DNA repair. It cleaves phosphodiester bonds at apurinic or apyrimidinic (AP) sites, generating a 3'-hydroxyl group and a 5'-terminal sugar phosphate. The protein is Probable endonuclease 4 of Bacillus cereus (strain G9842).